Reading from the N-terminus, the 337-residue chain is Glyceraldehyde-3-phosphate dehydrogenase (337 aa).

NAD(+)-binding positions include 12 to 13 (RI), Asp-34, and Lys-79. D-glyceraldehyde 3-phosphate is bound by residues 150–152 (SCT), Thr-181, 210–211 (TG), and Arg-233. Cys-151 acts as the Nucleophile in catalysis. Asn-315 contacts NAD(+).

Belongs to the glyceraldehyde-3-phosphate dehydrogenase family. Homotetramer.

The protein localises to the cytoplasm. It catalyses the reaction D-glyceraldehyde 3-phosphate + phosphate + NAD(+) = (2R)-3-phospho-glyceroyl phosphate + NADH + H(+). Its pathway is carbohydrate degradation; glycolysis; pyruvate from D-glyceraldehyde 3-phosphate: step 1/5. This chain is Glyceraldehyde-3-phosphate dehydrogenase (GPD), found in Cochliobolus lunatus (Filamentous fungus).